We begin with the raw amino-acid sequence, 312 residues long: Malate dehydrogenase (312 aa).

Residues 7 to 13 (GAAGGIG) and Asp34 each bind NAD(+). Arg81 and Arg87 together coordinate substrate. Residues Asn94 and 117 to 119 (ITN) each bind NAD(+). Substrate is bound by residues Asn119 and Arg153. The Proton acceptor role is filled by His177. Residue Met227 coordinates NAD(+).

The protein belongs to the LDH/MDH superfamily. MDH type 1 family. As to quaternary structure, homodimer.

The catalysed reaction is (S)-malate + NAD(+) = oxaloacetate + NADH + H(+). In terms of biological role, catalyzes the reversible oxidation of malate to oxaloacetate. This chain is Malate dehydrogenase, found in Yersinia pseudotuberculosis serotype O:1b (strain IP 31758).